The chain runs to 360 residues: Chorismate synthase (360 aa).

NADP(+) is bound by residues Arg48 and Arg54. FMN is bound by residues 125-127 (RSS), 246-247 (NA), Gly286, 301-305 (KPTSS), and Arg327.

It belongs to the chorismate synthase family. Homotetramer. Requires FMNH2 as cofactor.

The catalysed reaction is 5-O-(1-carboxyvinyl)-3-phosphoshikimate = chorismate + phosphate. It participates in metabolic intermediate biosynthesis; chorismate biosynthesis; chorismate from D-erythrose 4-phosphate and phosphoenolpyruvate: step 7/7. Functionally, catalyzes the anti-1,4-elimination of the C-3 phosphate and the C-6 proR hydrogen from 5-enolpyruvylshikimate-3-phosphate (EPSP) to yield chorismate, which is the branch point compound that serves as the starting substrate for the three terminal pathways of aromatic amino acid biosynthesis. This reaction introduces a second double bond into the aromatic ring system. The protein is Chorismate synthase of Actinobacillus pleuropneumoniae serotype 7 (strain AP76).